The chain runs to 572 residues: Triacylglycerol lipase OBL1 (572 aa).

Residues 110–130 (GYLVEFFLNLFSLNGNFLGLL) form a helical membrane-spanning segment. The interval 320 to 356 (IPPSESSKSSTSFSDSDAHTGSDLSSDSERPTDTRKK) is disordered. Residues 323–334 (SESSKSSTSFSD) show a composition bias toward low complexity. Basic and acidic residues predominate over residues 346 to 356 (DSERPTDTRKK). Positions 391–395 (GHSLG) match the GXSXG motif. Catalysis depends on serine 393, which acts as the Nucleophile. Residues aspartate 457 and histidine 550 each act as charge relay system in the active site.

It belongs to the AB hydrolase superfamily. Lipase family. Expressed in pollen grains and pollen tubes.

It localises to the lipid droplet. The protein localises to the membrane. The catalysed reaction is 1,2-di-(9Z-octadecenoyl)-glycerol + (9Z)-octadecenoate + H(+) = 1,2,3-tri-(9Z-octadecenoyl)-glycerol + H2O. It carries out the reaction 1-(9Z-octadecenoyl)-glycerol + H2O = glycerol + (9Z)-octadecenoate + H(+). Acid lipase that can hydrolyze a range of triacylglycerols without a clear preference for acyl-chains. Can also cleave 1,2-diacylglycerol, 1,3-diacylglycerol and 1-monoacylglycerol, but not phosphatidylcholine, phosphatidylethanolamine, or sterol esters. Required for pollen tube growth. Triacylglycerol hydrolysis by OBL1 may provide acyl groups for the synthesis of membrane lipids in growing pollen tubes. This is Triacylglycerol lipase OBL1 from Nicotiana tabacum (Common tobacco).